Here is a 781-residue protein sequence, read N- to C-terminus: Mitochondrial inner membrane m-AAA protease component paraplegin (781 aa).

A mitochondrion-targeting transit peptide spans 1 to 43 (MAAALLLLRALRQSPEPGPWRLWAQLSGRSPGLFSGAGGRRPY). Positions 44-105 (VVRGTPIGLA…GSTLYFNTSG (62 aa)) are cleaved as a propeptide — removed in mature form. A disordered region spans residues 105 to 134 (GLKQKNKDDDKPKGKAPEDDEEERRRKERE). The Mitochondrial matrix portion of the chain corresponds to 106–144 (LKQKNKDDDKPKGKAPEDDEEERRRKEREDQMYRERLRT). Basic and acidic residues predominate over residues 109-134 (KNKDDDKPKGKAPEDDEEERRRKERE). Residues 145–165 (LFIIAIVMSLLNSLSTSGGSI) traverse the membrane as a helical segment. The Mitochondrial intermembrane portion of the chain corresponds to 166–248 (SWADFVNEML…DRIPVSYKRT (83 aa)). The chain crosses the membrane as a helical span at residues 249 to 269 (GFFGNALYALGMTAVGLAILW). Residues 270–781 (YVFRLAGMTG…ASGEEEAPAP (512 aa)) lie on the Mitochondrial matrix side of the membrane. ATP-binding residues include alanine 312, glycine 352, cysteine 353, glycine 354, lysine 355, threonine 356, and leucine 357. Tyrosine 505 is subject to 3'-nitrotyrosine. Histidine 574 is a Zn(2+) binding site. The active site involves glutamate 575. Zn(2+) contacts are provided by histidine 578 and aspartate 650. Residues 701–781 (HEARLLVARA…ASGEEEAPAP (81 aa)) are interaction with PPIF.

It in the N-terminal section; belongs to the AAA ATPase family. In the C-terminal section; belongs to the peptidase M41 family. As to quaternary structure, forms heterooligomers with AFG3L2; the m-AAA protease is composed of heterohexamers of AFG3L2 and SPG7. Component of the mitochondrial permeability transition pore complex (mPTPC), at least composed of SPG7, VDAC1 and PPIF. Interacts with MAIP1. Requires Zn(2+) as cofactor. In terms of processing, upon import into the mitochondrion, the N-terminal transit peptide is cleaved by the mitochondrial-processing peptidase (MPP) to generate an intermediate form which undergoes a second proteolytic cleavage mediated by proteases AFG3L2 removing an additional N-terminal fragment to generate the proteolytically active mature form.

It is found in the mitochondrion inner membrane. It catalyses the reaction ATP + H2O = ADP + phosphate + H(+). Catalytic component of the m-AAA protease, a protease that plays a key role in proteostasis of inner mitochondrial membrane proteins, and which is essential for axonal and neuron development. SPG7 possesses both ATPase and protease activities: the ATPase activity is required to unfold substrates, threading them into the internal proteolytic cavity for hydrolysis into small peptide fragments. The m-AAA protease exerts a dual role in the mitochondrial inner membrane: it mediates the processing of specific regulatory proteins and ensures protein quality control by degrading misfolded polypeptides. Mediates protein maturation of the mitochondrial ribosomal subunit MRPL32/bL32m by catalyzing the cleavage of the presequence of MRPL32/bL32m prior to assembly into the mitochondrial ribosome. Acts as a regulator of calcium in neurons by mediating degradation of SMDT1/EMRE before its assembly with the uniporter complex, limiting the availability of SMDT1/EMRE for MCU assembly and promoting efficient assembly of gatekeeper subunits with MCU. Also regulates mitochondrial calcium by catalyzing degradation of MCU. Plays a role in the formation and regulation of the mitochondrial permeability transition pore (mPTP) and its proteolytic activity is dispensable for this function. The chain is Mitochondrial inner membrane m-AAA protease component paraplegin (Spg7) from Rattus norvegicus (Rat).